The following is a 38-amino-acid chain: Turripeptide GpIAa (38 aa).

This sequence belongs to the turripeptide family. In terms of tissue distribution, expressed by the venom duct.

It localises to the secreted. This is Turripeptide GpIAa from Cryptogemma periscelida (Atlantic gem-turris).